A 174-amino-acid chain; its full sequence is NADH dehydrogenase [ubiquinone] 1 alpha subcomplex assembly factor 4 (174 aa).

Residue Gly2 is the site of N-myristoyl glycine attachment. Basic and acidic residues predominate over residues 15 to 24 (EKRAEQEISK). The tract at residues 15–38 (EKRAEQEISKRKPSMAPKHPSTRS) is disordered. Ser35 carries the phosphoserine modification.

It belongs to the NDUFAF4 family. Binds calmodulin. Interacts with NDUFAF3. Post-translationally, phosphorylated on serine. Prolactin stimulate serine phosphorylation.

It localises to the mitochondrion. Its subcellular location is the membrane. In terms of biological role, may be involved in cell proliferation and survival of hormone-dependent tumor cells. Involved in the assembly of mitochondrial NADH:ubiquinone oxidoreductase complex (complex I). The chain is NADH dehydrogenase [ubiquinone] 1 alpha subcomplex assembly factor 4 (Ndufaf4) from Rattus norvegicus (Rat).